A 316-amino-acid polypeptide reads, in one-letter code: Lys-63-specific deubiquitinase BRCC36 (316 aa).

The residue at position 2 (Ala2) is an N-acetylalanine. The MPN domain maps to 12–179 (VHLESDAFLV…YTCFQSIQAQ (168 aa)). Zn(2+)-binding residues include His122, His124, and Asp135. Positions 122-135 (HSHPHITVWPSHVD) match the JAMM motif motif. A Phosphoserine modification is found at Ser258.

This sequence belongs to the peptidase M67A family. BRCC36 subfamily. As to quaternary structure, component of the ARISC complex, at least composed of UIMC1/RAP80, ABRAXAS1, BRCC3/BRCC36, BABAM2 and BABAM1/NBA1. Component of the BRCA1-A complex, at least composed of BRCA1, BARD1, UIMC1/RAP80, ABRAXAS1, BRCC3/BRCC36, BABAM2 and BABAM1/NBA1. In the BRCA1-A complex, interacts directly with ABRAXAS1 and BABAM2. Component of the BRISC complex, at least composed of ABRAXAS2, BRCC3/BRCC36, BABAM2 and BABAM1/NBA1. Identified in a complex with SHMT2 and the other subunits of the BRISC complex. In the BRISC complex, interacts directly with ABRAXAS2. Identified in a complex with ABRAXAS2 and NUMA1. The BRISC complex interacts with the CSN complex. Component of the BRCA1/BRCA2 containing complex (BRCC), which also contains BRCA1, BRCA2, BARD1, BABAM2 and RAD51. BRCC is a ubiquitin E3 ligase complex that enhances cellular survival following DNA damage. Interacts with BRCA1. Binds polyubiquitin. Interacts with PWWP2B. Interacts with HDAC1; this interaction is enhanced in the presence of PWWP2B. It depends on Zn(2+) as a cofactor.

It is found in the nucleus. The protein localises to the cytoplasm. Its subcellular location is the cytoskeleton. It localises to the spindle pole. Functionally, metalloprotease that specifically cleaves 'Lys-63'-linked polyubiquitin chains. Does not have activity toward 'Lys-48'-linked polyubiquitin chains. Component of the BRCA1-A complex, a complex that specifically recognizes 'Lys-63'-linked ubiquitinated histones H2A and H2AX at DNA lesions sites, leading to target the BRCA1-BARD1 heterodimer to sites of DNA damage at double-strand breaks (DSBs). In the BRCA1-A complex, it specifically removes 'Lys-63'-linked ubiquitin on histones H2A and H2AX, antagonizing the RNF8-dependent ubiquitination at double-strand breaks (DSBs). Catalytic subunit of the BRISC complex, a multiprotein complex that specifically cleaves 'Lys-63'-linked ubiquitin in various substrates. Mediates the specific 'Lys-63'-specific deubiquitination associated with the COP9 signalosome complex (CSN), via the interaction of the BRISC complex with the CSN complex. The BRISC complex is required for normal mitotic spindle assembly and microtubule attachment to kinetochores via its role in deubiquitinating NUMA1. Plays a role in interferon signaling via its role in the deubiquitination of the interferon receptor IFNAR1; deubiquitination increases IFNAR1 activity by enhancing its stability and cell surface expression. Acts as a regulator of the NLRP3 inflammasome by mediating deubiquitination of NLRP3, leading to NLRP3 inflammasome assembly. Down-regulates the response to bacterial lipopolysaccharide (LPS) via its role in IFNAR1 deubiquitination. Deubiquitinates HDAC1 and PWWP2B leading to their stabilization. The chain is Lys-63-specific deubiquitinase BRCC36 (BRCC3) from Bos taurus (Bovine).